Reading from the N-terminus, the 620-residue chain is FAD-linked oxidoreductase notD (620 aa).

Residues 1 to 21 (MHYIRELLIVVFTSCPALSYA) form the signal peptide. N-linked (GlcNAc...) asparagine glycans are attached at residues Asn-50, Asn-86, and Asn-109. The 190-residue stretch at 124–313 (SQGRIPRYSA…TSVTMPVFGA (190 aa)) folds into the FAD-binding PCMH-type domain. An N-linked (GlcNAc...) asparagine glycan is attached at Asn-403.

Belongs to the oxygen-dependent FAD-linked oxidoreductase family. FAD serves as cofactor.

It participates in alkaloid biosynthesis. FAD-linked oxidoreductase; part of the gene cluster that mediates the biosynthesis of notoamide, a fungal indole alkaloid that belongs to a family of natural products containing a characteristic bicyclo[2.2.2]diazaoctane core. The first step of notoamide biosynthesis involves coupling of L-proline and L-tryptophan by the bimodular NRPS notE, to produce cyclo-L-tryptophan-L-proline called brevianamide F. The reverse prenyltransferase notF then acts as a deoxybrevianamide E synthase and converts brevianamide F to deoxybrevianamide E via reverse prenylation at C-2 of the indole ring leading to the bicyclo[2.2.2]diazaoctane core. Deoxybrevianamide E is further hydroxylated at C-6 of the indole ring, likely catalyzed by the cytochrome P450 monooxygenase notG, to yield 6-hydroxy-deoxybrevianamide E. 6-hydroxy-deoxybrevianamide E is a specific substrate of the prenyltransferase notC for normal prenylation at C-7 to produce 6-hydroxy-7-prenyl-deoxybrevianamide, also called notoamide S. As the proposed pivotal branching point in notoamide biosynthesis, notoamide S can be diverted to notoamide E through an oxidative pyran ring closure putatively catalyzed by either notH cytochrome P450 monooxygenase or the notD FAD-linked oxidoreductase. This step would be followed by an indole 2,3-epoxidation-initiated pinacol-like rearrangement catalyzed by the notB FAD-dependent monooxygenase leading to the formation of notoamide C and notoamide D. On the other hand notoamide S is converted to notoamide T by notH (or notD), a bifunctional oxidase that also functions as the intramolecular Diels-Alderase responsible for generation of (+)-notoamide T. To generate antipodal (-)-notoaminide T, notH' (or notD') in Aspergillus versicolor is expected to catalyze a Diels-Alder reaction leading to the opposite stereochemistry. The remaining oxidoreductase notD (or notH) likely catalyzes the oxidative pyran ring formation to yield (+)-stephacidin A. The FAD-dependent monooxygenase notI is highly similar to notB and is predicted to catalyze a similar conversion from (+)-stephacidin A to (-)-notoamide B via the 2,3-epoxidation of (+)-stephacidin A followed by a pinacol-type rearrangement. Finally, it remains unclear which enzyme could be responsible for the final hydroxylation steps leading to notoamide A and sclerotiamide. The chain is FAD-linked oxidoreductase notD from Aspergillus sp. (strain MF297-2).